The chain runs to 420 residues: Probable pectate lyase C (420 aa).

Positions methionine 1–alanine 20 are cleaved as a signal peptide. Asparagine 49, asparagine 165, and asparagine 202 each carry an N-linked (GlcNAc...) asparagine glycan. Arginine 205 is an active-site residue. Residues asparagine 262–valine 297 form the EF-hand domain. The Ca(2+) site is built by aspartate 275, aspartate 277, aspartate 279, glutamine 281, and glutamate 286. Positions threonine 358–serine 396 are disordered. N-linked (GlcNAc...) asparagine glycosylation is present at asparagine 394.

It belongs to the polysaccharide lyase 1 family. Ca(2+) is required as a cofactor.

It is found in the secreted. The catalysed reaction is Eliminative cleavage of (1-&gt;4)-alpha-D-galacturonan to give oligosaccharides with 4-deoxy-alpha-D-galact-4-enuronosyl groups at their non-reducing ends.. Its function is as follows. Pectinolytic enzyme consist of four classes of enzymes: pectin lyase, polygalacturonase, pectin methylesterase and rhamnogalacturonase. Among pectinolytic enzymes, pectin lyase is the most important in depolymerization of pectin, since it cleaves internal glycosidic bonds of highly methylated pectins. Favors pectate, the anion, over pectin, the methyl ester. This is Probable pectate lyase C (plyC) from Aspergillus fumigatus (strain CBS 144.89 / FGSC A1163 / CEA10) (Neosartorya fumigata).